Consider the following 502-residue polypeptide: MKIGFDHEKYLEEQSKYILERVDSYDKLYLEFGGKLFNDRHAMRVLPGFDENAKIKLLHKLKEKVEVVICVYAGDIERNKIRGDFGITYDMDVLRLIDDLRTYELEVNSVVITRYNGQPATTVFINKLERRGIKVYKHKSTKGYPTDVDTIVSEEGYGQNPYIETTKPIVVVTAPGPGSGKLATCLSQLYHESKRGNAAGYSKFETFPVWNVPLKHPLNIAYEAATVDLKDVNMLDSFHMDAYNKVTVNYNRDIESFPVLKRIIEKITGKESIYKSPTDMGVNRVGFGIVDDDAVKEASKQEIIRRYFKTGCDYKKGYADKETFDRSKLIMEEVDLKETDRKVVLPAREKSAKLKMATDENEICPVVALELSDGTILTGKSSDLMDGAAAVIINAIKYLANISDDIYLISPVILEPIMNLKSKTFNEKNISLNCEEVLTALSISAATNPTAQVAMEKLPLLRGCQAHATTILSRADDTTLGKLGVDVTCDPNYPSESLYYNN.

The protein belongs to the UPF0371 family.

This Clostridium botulinum (strain Alaska E43 / Type E3) protein is UPF0371 protein CLH_2534.